The chain runs to 72 residues: uncharacterized protein (72 aa).

The helical transmembrane segment at 11–31 (WCCTVLSAFGVVILSVIAHLF) threads the bilayer.

Its subcellular location is the membrane. This is an uncharacterized protein from Saccharomyces cerevisiae (strain ATCC 204508 / S288c) (Baker's yeast).